The sequence spans 101 residues: Enhancer of yellow 2 transcription factor (101 aa).

It belongs to the ENY2 family. In terms of assembly, component of the nuclear pore complex (NPC)-associated AMEX complex (anchoring and mRNA export complex), composed of at least e(y)2 and xmas-2. Component of the SAGA transcription coactivator-HAT complexes, at least composed of Ada2b, e(y)2, Pcaf/Gcn5, Taf10 and Nipped-A/Trrap. Within the SAGA complex, e(y)2, Sgf11, and not/nonstop form an additional subcomplex of SAGA called the DUB module (deubiquitination module). Component of the THO complex, composed of at least e(y)2, HPR1, THO2, THOC5, THOC6 and THOC7. Interacts with e(y)1. Interacts with su(Hw) (via zinc fingers). Interacts with xmas-2; required for localization to the nuclear periphery. Interacts with the nuclear pore complex (NPC).

The protein resides in the nucleus. It is found in the nucleoplasm. It localises to the cytoplasm. In terms of biological role, involved in mRNA export coupled transcription activation by association with both the AMEX and the SAGA complexes. The SAGA complex is a multiprotein complex that activates transcription by remodeling chromatin and mediating histone acetylation and deubiquitination. Within the SAGA complex, participates in a subcomplex that specifically deubiquitinates histone H2B. The SAGA complex is recruited to specific gene promoters by activators, where it is required for transcription. Required for nuclear receptor-mediated transactivation. Involved in transcription elongation by recruiting the THO complex onto nascent mRNA. The AMEX complex functions in docking export-competent ribonucleoprotein particles (mRNPs) to the nuclear entrance of the nuclear pore complex (nuclear basket). AMEX participates in mRNA export and accurate chromatin positioning in the nucleus by tethering genes to the nuclear periphery. The protein is Enhancer of yellow 2 transcription factor of Drosophila yakuba (Fruit fly).